The sequence spans 179 residues: Large ribosomal subunit protein uL5 (179 aa).

It belongs to the universal ribosomal protein uL5 family. As to quaternary structure, part of the 50S ribosomal subunit; part of the 5S rRNA/L5/L18/L25 subcomplex. Contacts the 5S rRNA and the P site tRNA. Forms a bridge to the 30S subunit in the 70S ribosome.

In terms of biological role, this is one of the proteins that bind and probably mediate the attachment of the 5S RNA into the large ribosomal subunit, where it forms part of the central protuberance. In the 70S ribosome it contacts protein S13 of the 30S subunit (bridge B1b), connecting the 2 subunits; this bridge is implicated in subunit movement. Contacts the P site tRNA; the 5S rRNA and some of its associated proteins might help stabilize positioning of ribosome-bound tRNAs. This chain is Large ribosomal subunit protein uL5, found in Shewanella frigidimarina (strain NCIMB 400).